The chain runs to 313 residues: Glyoxylate/hydroxypyruvate reductase A (313 aa).

Arg228 is an active-site residue. The Proton donor role is filled by His276.

Belongs to the D-isomer specific 2-hydroxyacid dehydrogenase family. GhrA subfamily.

The protein resides in the cytoplasm. It catalyses the reaction glycolate + NADP(+) = glyoxylate + NADPH + H(+). The catalysed reaction is (R)-glycerate + NAD(+) = 3-hydroxypyruvate + NADH + H(+). The enzyme catalyses (R)-glycerate + NADP(+) = 3-hydroxypyruvate + NADPH + H(+). In terms of biological role, catalyzes the NADPH-dependent reduction of glyoxylate and hydroxypyruvate into glycolate and glycerate, respectively. The sequence is that of Glyoxylate/hydroxypyruvate reductase A from Yersinia enterocolitica serotype O:8 / biotype 1B (strain NCTC 13174 / 8081).